A 706-amino-acid chain; its full sequence is Glutamine-dependent NAD(+) synthetase (706 aa).

Residues 5–275 (VTVATCALNQ…VEVLTATLDL (271 aa)) form the CN hydrolase domain. The active-site Proton acceptor; for glutaminase activity is glutamate 45. Lysine 114 acts as the For glutaminase activity in catalysis. Cysteine 175 functions as the Nucleophile; for glutaminase activity in the catalytic mechanism. Residues 325-706 (YHSPEEEISL…AAPQSLDGVD (382 aa)) form a ligase region. Residue 355–362 (PLSGGVDS) participates in ATP binding. Serine 357 is an active-site residue.

It in the C-terminal section; belongs to the NAD synthetase family. Homohexamer.

The catalysed reaction is deamido-NAD(+) + L-glutamine + ATP + H2O = L-glutamate + AMP + diphosphate + NAD(+) + H(+). It participates in cofactor biosynthesis; NAD(+) biosynthesis; NAD(+) from deamido-NAD(+) (L-Gln route): step 1/1. Its function is as follows. Catalyzes the final step of the nicotinamide adenine dinucleotide (NAD) de novo synthesis pathway, the ATP-dependent amidation of deamido-NAD using L-glutamine as a nitrogen source. The chain is Glutamine-dependent NAD(+) synthetase (NADSYN1) from Macaca fascicularis (Crab-eating macaque).